The chain runs to 236 residues: Phycobilisome rod-core linker polypeptide cpcG (236 aa).

A PBS-linker domain is found at 11–193; that stretch reads STQNQRVNGF…LDYNFLYKKN (183 aa).

The protein belongs to the phycobilisome linker protein family. The phycobilisome is a hemidiscoidal structure that is composed of two distinct substructures: a core complex and a number of rods radiating from the core.

It localises to the plastid. The protein localises to the chloroplast. The protein resides in the chloroplast thylakoid membrane. Its function is as follows. Rod-core linker protein required for attachment of phycocyanin to allophycocyanin in cores of phycobilisomes. Linker polypeptides determine the state of aggregation and the location of the disk-shaped phycobiliprotein units within the phycobilisome and modulate their spectroscopic properties in order to mediate a directed and optimal energy transfer. In Aglaothamnion neglectum (Red alga), this protein is Phycobilisome rod-core linker polypeptide cpcG (cpcG).